The chain runs to 159 residues: MIANQTIVDIVTQVVTPAIQAPFELVDVEYEKMGGDYVLSILIDKPGGITVEDTAQLTDVVSPLLDTIQPDPFPEQYMLEVSSPGLERPLKTAEALSNAVGSYINVSLYKSIDKVKIFEGDLLSFDGETLTIDYMDKTRHKTVDIPYQTVAKARLAVKL.

This sequence belongs to the RimP family.

It localises to the cytoplasm. Its function is as follows. Required for maturation of 30S ribosomal subunits. In Streptococcus agalactiae serotype III (strain NEM316), this protein is Ribosome maturation factor RimP.